The chain runs to 336 residues: Holliday junction branch migration complex subunit RuvB (336 aa).

The tract at residues 1–184 (MYDEERIVSG…FGIVGHMEYY (184 aa)) is large ATPase domain (RuvB-L). ATP contacts are provided by residues L23, R24, G65, K68, T69, T70, 131 to 133 (EDY), R174, Y184, and R221. T69 lines the Mg(2+) pocket. A small ATPAse domain (RuvB-S) region spans residues 185-255 (NEVDLSQIIK…IVQFALDLLR (71 aa)). The interval 258–336 (KVGLDRTDRK…HLGIKYNKEG (79 aa)) is head domain (RuvB-H). Residues R313 and R318 each coordinate DNA.

Belongs to the RuvB family. As to quaternary structure, homohexamer. Forms an RuvA(8)-RuvB(12)-Holliday junction (HJ) complex. HJ DNA is sandwiched between 2 RuvA tetramers; dsDNA enters through RuvA and exits via RuvB. An RuvB hexamer assembles on each DNA strand where it exits the tetramer. Each RuvB hexamer is contacted by two RuvA subunits (via domain III) on 2 adjacent RuvB subunits; this complex drives branch migration. In the full resolvosome a probable DNA-RuvA(4)-RuvB(12)-RuvC(2) complex forms which resolves the HJ.

The protein localises to the cytoplasm. The enzyme catalyses ATP + H2O = ADP + phosphate + H(+). The RuvA-RuvB-RuvC complex processes Holliday junction (HJ) DNA during genetic recombination and DNA repair, while the RuvA-RuvB complex plays an important role in the rescue of blocked DNA replication forks via replication fork reversal (RFR). RuvA specifically binds to HJ cruciform DNA, conferring on it an open structure. The RuvB hexamer acts as an ATP-dependent pump, pulling dsDNA into and through the RuvAB complex. RuvB forms 2 homohexamers on either side of HJ DNA bound by 1 or 2 RuvA tetramers; 4 subunits per hexamer contact DNA at a time. Coordinated motions by a converter formed by DNA-disengaged RuvB subunits stimulates ATP hydrolysis and nucleotide exchange. Immobilization of the converter enables RuvB to convert the ATP-contained energy into a lever motion, pulling 2 nucleotides of DNA out of the RuvA tetramer per ATP hydrolyzed, thus driving DNA branch migration. The RuvB motors rotate together with the DNA substrate, which together with the progressing nucleotide cycle form the mechanistic basis for DNA recombination by continuous HJ branch migration. Branch migration allows RuvC to scan DNA until it finds its consensus sequence, where it cleaves and resolves cruciform DNA. In Ligilactobacillus salivarius (strain UCC118) (Lactobacillus salivarius), this protein is Holliday junction branch migration complex subunit RuvB.